Here is an 870-residue protein sequence, read N- to C-terminus: Patatin-like phospholipase domain-containing protein NCU11180 (870 aa).

Disordered regions lie at residues M1–A24 and K131–A158. Basic and acidic residues predominate over residues K131–R141. Over residues N142–K155 the composition is skewed to basic residues. The chain crosses the membrane as a helical span at residues W183–T203. A disordered region spans residues E281–T320. Over residues S289 to K308 the composition is skewed to polar residues. In terms of domain architecture, PNPLA spans L399–N590. Residues G430–G434 carry the GXSXG motif. S432 functions as the Nucleophile in the catalytic mechanism. The active-site Proton acceptor is the D577. Disordered stretches follow at residues R735–G786 and G804–T870. Residues T818 to G834 show a composition bias toward acidic residues.

The protein belongs to the PLPL family.

The protein resides in the membrane. Probable lipid hydrolase. This is Patatin-like phospholipase domain-containing protein NCU11180 from Neurospora crassa (strain ATCC 24698 / 74-OR23-1A / CBS 708.71 / DSM 1257 / FGSC 987).